The primary structure comprises 499 residues: Ent-kaurenoic acid oxidase 1 (499 aa).

Residues 5–25 (AWWAVAAVVAALAVVALDAAV) form a helical membrane-spanning segment. Cysteine 443 provides a ligand contact to heme.

This sequence belongs to the cytochrome P450 family. Heme is required as a cofactor.

It localises to the endoplasmic reticulum membrane. It catalyses the reaction ent-kaur-16-en-19-oate + 3 reduced [NADPH--hemoprotein reductase] + 3 O2 = gibberellin A12 + 3 oxidized [NADPH--hemoprotein reductase] + 4 H2O + 4 H(+). It carries out the reaction ent-kaur-16-en-19-oate + reduced [NADPH--hemoprotein reductase] + O2 = ent-7alpha-hydroxykaur-16-en-19-oate + oxidized [NADPH--hemoprotein reductase] + H2O + H(+). The catalysed reaction is ent-7alpha-hydroxykaur-16-en-19-oate + reduced [NADPH--hemoprotein reductase] + O2 = gibberellin A12 aldehyde + oxidized [NADPH--hemoprotein reductase] + 2 H2O + H(+). The enzyme catalyses gibberellin A12 aldehyde + reduced [NADPH--hemoprotein reductase] + O2 = gibberellin A12 + oxidized [NADPH--hemoprotein reductase] + H2O + 2 H(+). It functions in the pathway plant hormone biosynthesis; gibberellin biosynthesis. Its function is as follows. Catalyzes three successive oxidations of ent-kaurenoic acid giving gibberellin 12 (GA12), a key step in gibberellins (GAs) biosynthesis. GAs, which are involved many processes, including stem elongation, play a central role in plant development. The sequence is that of Ent-kaurenoic acid oxidase 1 from Hordeum vulgare (Barley).